A 398-amino-acid polypeptide reads, in one-letter code: Apolipoprotein L1 (398 aa).

The signal sequence occupies residues 1–27; the sequence is MEGAALLRVSVLCIWMSALFLGVGVRA. Residues 35-47 are compositionally biased toward polar residues; the sequence is QQNVPSGTDTGDP. Residues 35–55 form a disordered region; it reads QQNVPSGTDTGDPQSKPLGDW. Asn-261 is a glycosylation site (N-linked (GlcNAc...) asparagine). Residues 297–317 are disordered; the sequence is PHASASRPRVTEPISAESGEQ. Phosphoserine; by FAM20C occurs at positions 311 and 314.

This sequence belongs to the apolipoprotein L family. In terms of assembly, in plasma, interacts with APOA1 and mainly associated with large high density lipoprotein particles. Phosphorylated by FAM20C in the extracellular medium. As to expression, plasma. Found on APOA-I-containing high density lipoprotein (HDL3). Expressed in pancreas, lung, prostate, liver, placenta and spleen.

The protein resides in the secreted. In terms of biological role, may play a role in lipid exchange and transport throughout the body. May participate in reverse cholesterol transport from peripheral cells to the liver. This is Apolipoprotein L1 (APOL1) from Homo sapiens (Human).